A 5635-amino-acid chain; its full sequence is Hemicentin-1 (5635 aa).

The N-terminal stretch at 1–21 (MISWEVVHTVFLFALLYSSLA) is a signal peptide. Positions 41–216 (TLAFVFDVTG…EVLKWVEEAV (176 aa)) constitute a VWFA domain. N-linked (GlcNAc...) asparagine glycans are attached at residues Asn-349 and Asn-390. Ig-like C2-type domains are found at residues 431-517 (PKVT…FDVS), 520-607 (PPVI…VFLT), 612-697 (PKVT…STLR), 702-788 (PKLM…ITLD), 793-883 (PVFI…TTVT), 890-976 (PLIG…TSVV), 981-1067 (PTIQ…VQLT), 1072-1166 (PRVF…VKLN), 1171-1255 (PKIQ…TEIT), 1262-1354 (PTVE…YNLK), 1358-1447 (PPVI…FNID), 1452-1541 (PTII…IKLT), 1546-1634 (PSIK…FHVD), 1638-1724 (PPMI…KEIK), 1733-1821 (PAIE…FEVT), 1826-1914 (PTIK…IQLH), 1919-2007 (PSLE…YSLQ), 2012-2097 (PSIS…RDID), 2104-2190 (PNIM…YNVN), 2195-2285 (PNIG…YNLQ), 2290-2379 (PTIT…YDLS), 2384-2470 (PSII…RKIF), 2478-2564 (PHIV…RSFS), 2571-2662 (PTIA…YEVK), 2666-2763 (PPII…VNIQ), 2766-2864 (PSFQ…YDVR), 2868-2959 (PPII…FNLN), 2964-3051 (PSVI…FSLT), 3056-3146 (PSIK…FHLN), 3151-3240 (PSIE…YFLS), 3245-3335 (PSVA…FNLN), 3340-3429 (PTIR…YNLQ), 3434-3516 (PNMD…GEVS), 3527-3615 (PHIN…YLVR), 3620-3708 (PNIA…FILT), 3713-3797 (PNIK…RRID), 3804-3892 (PSIA…VDLT), 3897-3983 (PSIA…VTLH), 3988-4076 (PVIQ…LNVQ), 4079-4164 (PVIS…TKLT), 4169-4255 (PRIR…VSLT), 4260-4344 (PTFT…GFVY), 4348-4435 (PPVF…MSLT), and 4440-4527 (PIIT…VIVQ). Residues Cys-451 and Cys-499 are joined by a disulfide bond. Asn-528, Asn-550, Asn-573, and Asn-620 each carry an N-linked (GlcNAc...) asparagine glycan. Cys-541 and Cys-591 are oxidised to a cystine. An intrachain disulfide couples Cys-633 to Cys-681. Asn-693 is a glycosylation site (N-linked (GlcNAc...) asparagine). A disulfide bridge links Cys-723 with Cys-772. The N-linked (GlcNAc...) asparagine glycan is linked to Asn-809. Intrachain disulfides connect Cys-814–Cys-867 and Cys-911–Cys-960. Residue Asn-970 is glycosylated (N-linked (GlcNAc...) asparagine). Cystine bridges form between Cys-1002–Cys-1051 and Cys-1101–Cys-1150. The N-linked (GlcNAc...) asparagine glycan is linked to Asn-1158. A disulfide bond links Cys-1192 and Cys-1241. N-linked (GlcNAc...) asparagine glycosylation occurs at Asn-1272. A disulfide bridge connects residues Cys-1288 and Cys-1338. Asn-1369 is a glycosylation site (N-linked (GlcNAc...) asparagine). 2 disulfide bridges follow: Cys-1382-Cys-1431 and Cys-1475-Cys-1525. N-linked (GlcNAc...) asparagine glycosylation occurs at Asn-1552. 4 cysteine pairs are disulfide-bonded: Cys-1569/Cys-1618, Cys-1663/Cys-1712, Cys-1756/Cys-1805, and Cys-1848/Cys-1898. The N-linked (GlcNAc...) asparagine glycan is linked to Asn-1929. Disulfide bonds link Cys-1942–Cys-1991 and Cys-2033–Cys-2083. Residues Asn-2112 and Asn-2155 are each glycosylated (N-linked (GlcNAc...) asparagine). 3 cysteine pairs are disulfide-bonded: Cys-2125-Cys-2174, Cys-2218-Cys-2269, and Cys-2314-Cys-2363. N-linked (GlcNAc...) asparagine glycosylation is present at Asn-2395. Disulfide bonds link Cys-2408–Cys-2457, Cys-2501–Cys-2550, and Cys-2597–Cys-2646. Asn-2689 is a glycosylation site (N-linked (GlcNAc...) asparagine). 2 cysteine pairs are disulfide-bonded: Cys-2696–Cys-2745 and Cys-2799–Cys-2848. Asn-2887 carries N-linked (GlcNAc...) asparagine glycosylation. A disulfide bridge links Cys-2894 with Cys-2943. Asn-2973 carries N-linked (GlcNAc...) asparagine glycosylation. Cystine bridges form between Cys-2986–Cys-3035, Cys-3081–Cys-3130, Cys-3173–Cys-3224, Cys-3268–Cys-3319, Cys-3364–Cys-3413, and Cys-3457–Cys-3506. Asn-3221 and Asn-3300 each carry an N-linked (GlcNAc...) asparagine glycan. Asn-3530 carries N-linked (GlcNAc...) asparagine glycosylation. 2 disulfides stabilise this stretch: Cys-3550–Cys-3599 and Cys-3643–Cys-3692. Asn-3689 and Asn-3727 each carry an N-linked (GlcNAc...) asparagine glycan. A disulfide bridge connects residues Cys-3734 and Cys-3783. N-linked (GlcNAc...) asparagine glycosylation occurs at Asn-3812. 26 disulfides stabilise this stretch: Cys-3825–Cys-3876, Cys-3918–Cys-3967, Cys-4009–Cys-4058, Cys-4100–Cys-4148, Cys-4190–Cys-4239, Cys-4281–Cys-4328, Cys-4371–Cys-4419, Cys-4461–Cys-4509, Cys-4541–Cys-4578, Cys-4545–Cys-4583, Cys-4556–Cys-4568, Cys-4598–Cys-4635, Cys-4602–Cys-4640, Cys-4613–Cys-4625, Cys-4655–Cys-4692, Cys-4659–Cys-4697, Cys-4670–Cys-4682, Cys-4712–Cys-4749, Cys-4716–Cys-4754, Cys-4727–Cys-4739, Cys-4769–Cys-4806, Cys-4773–Cys-4811, Cys-4784–Cys-4796, Cys-4826–Cys-4863, Cys-4830–Cys-4868, and Cys-4841–Cys-4853. N-linked (GlcNAc...) asparagine glycosylation occurs at Asn-4029. N-linked (GlcNAc...) asparagine glycans are attached at residues Asn-4401 and Asn-4491. TSP type-1 domains are found at residues 4529–4584 (HGGF…KPCP), 4586–4641 (DGSW…RPCP), 4643–4698 (HGAW…RNCP), 4700–4755 (HGKW…DPCP), 4757–4812 (HGNW…DMCP), and 4814–4869 (DGSW…QACP). The N-linked (GlcNAc...) asparagine glycan is linked to Asn-4606. One can recognise a Nidogen G2 beta-barrel domain in the interval 4871-5093 (GPQRARGSVI…SKGDRSNQCP (223 aa)). Asn-4894 and Asn-5040 each carry an N-linked (GlcNAc...) asparagine glycan. In terms of domain architecture, EGF-like 1; calcium-binding spans 5107–5146 (DEDECAAGNPCSHSCHNAMGTYYCSCPKGLTIAADGRTCQ). Cystine bridges form between Cys-5111/Cys-5121, Cys-5117/Cys-5130, and Cys-5132/Cys-5145. The 45-residue stretch at 5147–5191 (DIDECALGRHTCHAGQDCDNTIGSYRCVVRCGSGFRRTSDGLSCQ) folds into the EGF-like 2; calcium-binding domain. Positions 5192–5229 (DINECQESSPCHQRCFNAIGSFHCGCEPGYQLKGRKCM) constitute an EGF-like 3; calcium-binding domain. 3 cysteine pairs are disulfide-bonded: Cys-5196–Cys-5206, Cys-5202–Cys-5215, and Cys-5217–Cys-5228. One can recognise an EGF-like 4; calcium-binding domain in the interval 5230–5271 (DVNECRQNVCRPDQHCKNTRGGYKCIDLCPNGMTKAENGTCI). N-linked (GlcNAc...) asparagine glycosylation occurs at Asn-5267. The region spanning 5272-5307 (DIDECKDGTHQCRYNQICENTRGSYRCVCPRGYRSQ) is the EGF-like 5; calcium-binding domain. Cystine bridges form between Cys-5276/Cys-5289, Cys-5283/Cys-5298, Cys-5319/Cys-5330, Cys-5326/Cys-5339, Cys-5341/Cys-5354, Cys-5436/Cys-5446, Cys-5442/Cys-5455, and Cys-5457/Cys-5470. The EGF-like 6; calcium-binding domain maps to 5315–5355 (DINECEQVPKPCAHQCSNTPGSFKCICPPGQHLLGDGKSCA). The EGF-like 7; calcium-binding domain occupies 5432–5471 (DIDECENTDACQHECKNTFGSYQCICPPGYQLTHNGKTCQ). Residue Asn-5615 is glycosylated (N-linked (GlcNAc...) asparagine).

Expressed in hair follicles and in the dermis (at protein level). As to expression, expressed in skin fibroblasts and retinal pigment epithelium (RPE) cells.

The protein localises to the secreted. It localises to the extracellular space. The protein resides in the extracellular matrix. Its subcellular location is the basement membrane. It is found in the cytoplasm. The protein localises to the cell junction. It localises to the cleavage furrow. In terms of biological role, involved in transforming growth factor beta-mediated rearrangement of the podocyte cytoskeleton which includes reduction of F-actin fibers and broadening, flattening and elongation of podocytes. Plays a role in basement membrane organization. May promote cleavage furrow maturation during cytokinesis in preimplantation embryos. May play a role in the architecture of adhesive and flexible epithelial cell junctions. May play a role during myocardial remodeling by imparting an effect on cardiac fibroblast migration. This Homo sapiens (Human) protein is Hemicentin-1 (HMCN1).